A 1721-amino-acid polypeptide reads, in one-letter code: Intersectin-1 (1721 aa).

The EH 1 domain occupies 21-109 (ERAKHDQQFH…PVMKQQPVAI (89 aa)). One can recognise an EF-hand 1 domain in the interval 53–88 (LPQPVLAQIWALADMNNDGRMDQVEFSIAMKLIKLK). D66, N68, D70, R72, and E77 together coordinate Ca(2+). S203 carries the phosphoserine modification. An EH 2 domain is found at 221–310 (SRLKYRQLFN…PEYIPPSFRR (90 aa)). One can recognise an EF-hand 2 domain in the interval 254-289 (LPQAQLASIWNLSDIDQDGKLTAEEFILAMHLIDVA). Ca(2+) contacts are provided by D267, D269, D271, K273, and E278. At S318 the chain carries Phosphoserine. Disordered regions lie at residues 322 to 348 (STSVDQRLPEEPVLEDEQQQLEKKLPV) and 650 to 701 (QRRA…KQEA). A KLERQ region spans residues 326-702 (DQRLPEEPVL…GEEKGKQEAQ (377 aa)). A coiled-coil region spans residues 355–659 (RENFERGNLE…QRRAQERDKQ (305 aa)). Phosphoserine is present on S687. In terms of domain architecture, SH3 1 spans 740-806 (VKVVYYRALY…PANYAEKIPE (67 aa)). The interval 836-868 (LAVTSSEPSTTPNNWADFSSTWPTSTNEKPETD) is disordered. Residues 838–862 (VTSSEPSTTPNNWADFSSTWPTSTN) are compositionally biased toward polar residues. The residue at position 897 (T897) is a Phosphothreonine. Phosphoserine occurs at positions 901, 902, and 904. An SH3 2 domain is found at 913 to 971 (VEGLQAQALYPWRAKKDNHLNFNKNDVITVLEQQDMWWFGEVQGQKGWFPKSYVKLISG). Phosphoserine occurs at positions 978, 986, and 995. 2 consecutive SH3 domains span residues 1002 to 1060 (VSGE…LKDS) and 1074 to 1138 (KKPE…LLSP). Positions 1074–1138 (KKPEIAQVIA…PANYVKLLSP (65 aa)) are required for interaction with FCHSD2. A Bipartite nuclear localization signal; in isoform 2 motif is present at residues 1104-1127 (RKKNPGGWWEGELQARGKKRQIGW). S1137 is subject to Phosphoserine. A Phosphothreonine modification is found at T1144. Positions 1155-1214 (AAVCQVIGMYDYTAQNDDELAFNKGQIINVLNKEDPDWWKGEVNGQVGLFPSNYVKLTTD) constitute an SH3 5 domain. The 187-residue stretch at 1237–1423 (KRQGYIHELI…EELCSQVNEG (187 aa)) folds into the DH domain. Positions 1462–1571 (KFLHSGKLYK…WVQKIKAASE (110 aa)) constitute a PH domain. The 117-residue stretch at 1579 to 1695 (KKREKAYLVR…KKDQGSKGPV (117 aa)) folds into the C2 domain. Residue S1645 is modified to Phosphoserine. 3 residues coordinate Ca(2+): D1667, S1670, and D1673.

In terms of assembly, interacts (via DH domain) with CDC42. Interacts (via SH3 domain 1) with WASL. Interacts with dynamin, SNAP25 and SNAP23. Interacts with clathrin-associated proteins and other components of the endocytic machinery, such as SPIN90, EPS15, EPN1, EPN2, STON2, FCHO1, FCHO2 and DAB2. Interacts (via SH3 domains) with REPS1 and SGIP1. Interacts with ARHGAP31. Interacts with ADAM15. Interacts with PRRT2. Interacts (via SH3 domain 4) with FCHSD2 (via SH3 domain 2). Interacts (via SH3 domain 1) with DENND2B. Interacts (via SH3 domains) with CBL. Isoform 2: Interacts with CBL and DNM1. Isoform 2: Interacts with LMNA. Isoform 2: Interacts with importin subunit KPNA1; this is likely to mediate its import into the nucleus. Interacts with DNM2. As to quaternary structure, (Microbial infection) Interacts with vaccinia virus protein A36. Requires Ca(2+) as cofactor. Isoform 1 is expressed almost exclusively in the brain. Isoform 2 is detected in brain, spleen, lung, liver, heart, skeletal muscle and kidney. Isoform 5 is primarily expressed in brain, spleen, lung and kidney (at protein level). Isoform 1 and isoform 2 are detected in brain. Isoform 2 is ubiquitous in adult and fetal tissues with high expression in skeletal muscle, heart, spleen, ovary, testis and all fetal tissues tested and low expression in thymus, blood, lung, liver and pancreas. Isoform 1 is expressed almost exclusively in the brain, in all brain regions. Not expressed in the spinal cord.

The protein resides in the endomembrane system. The protein localises to the synapse. Its subcellular location is the synaptosome. It localises to the cell projection. It is found in the lamellipodium. The protein resides in the cell membrane. The protein localises to the membrane. Its subcellular location is the clathrin-coated pit. It localises to the recycling endosome. It is found in the endosome. The protein resides in the cytoplasmic vesicle. The protein localises to the cytoplasm. Its subcellular location is the nucleus envelope. Functionally, adapter protein that provides a link between the endocytic membrane traffic and the actin assembly machinery. Acts as a guanine nucleotide exchange factor (GEF) for CDC42, and thereby stimulates actin nucleation mediated by WASL and the ARP2/3 complex. Plays a role in the assembly and maturation of clathrin-coated vesicles. Recruits FCHSD2 to clathrin-coated pits. Involved in endocytosis of activated EGFR, and probably also other growth factor receptors. Involved in endocytosis of integrin beta-1 (ITGB1) and transferrin receptor (TFR); internalization of ITGB1 as DAB2-dependent cargo but not TFR may involve association with DAB2. Promotes ubiquitination and subsequent degradation of EGFR, and thereby contributes to the down-regulation of EGFR-dependent signaling pathways. In chromaffin cells, required for normal exocytosis of catecholamines. Required for rapid replenishment of release-ready synaptic vesicles at presynaptic active zones. Inhibits ARHGAP31 activity toward RAC1. Its function is as follows. Plays a role in synaptic vesicle endocytosis in brain neurons. This chain is Intersectin-1, found in Homo sapiens (Human).